The sequence spans 169 residues: 2-C-methyl-D-erythritol 2,4-cyclodiphosphate synthase (169 aa).

Residues Asp-13 and His-15 each contribute to the a divalent metal cation site. 4-CDP-2-C-methyl-D-erythritol 2-phosphate contacts are provided by residues 13–15 (DIH) and 40–41 (HS). Position 48 (His-48) interacts with a divalent metal cation. 4-CDP-2-C-methyl-D-erythritol 2-phosphate contacts are provided by residues 62–64 (DIG), 138–141 (TTNE), and Arg-148.

Belongs to the IspF family. Homotrimer. The cofactor is a divalent metal cation.

The catalysed reaction is 4-CDP-2-C-methyl-D-erythritol 2-phosphate = 2-C-methyl-D-erythritol 2,4-cyclic diphosphate + CMP. It participates in isoprenoid biosynthesis; isopentenyl diphosphate biosynthesis via DXP pathway; isopentenyl diphosphate from 1-deoxy-D-xylulose 5-phosphate: step 4/6. Involved in the biosynthesis of isopentenyl diphosphate (IPP) and dimethylallyl diphosphate (DMAPP), two major building blocks of isoprenoid compounds. Catalyzes the conversion of 4-diphosphocytidyl-2-C-methyl-D-erythritol 2-phosphate (CDP-ME2P) to 2-C-methyl-D-erythritol 2,4-cyclodiphosphate (ME-CPP) with a corresponding release of cytidine 5-monophosphate (CMP). This chain is 2-C-methyl-D-erythritol 2,4-cyclodiphosphate synthase, found in Akkermansia muciniphila (strain ATCC BAA-835 / DSM 22959 / JCM 33894 / BCRC 81048 / CCUG 64013 / CIP 107961 / Muc).